The primary structure comprises 334 residues: Adenine deaminase (334 aa).

The Zn(2+) site is built by H17, H19, and H197. Catalysis depends on E200, which acts as the Proton donor. D278 lines the Zn(2+) pocket. A substrate-binding site is contributed by D279.

It belongs to the metallo-dependent hydrolases superfamily. Adenosine and AMP deaminases family. Adenine deaminase type 2 subfamily. It depends on Zn(2+) as a cofactor.

It carries out the reaction adenine + H2O + H(+) = hypoxanthine + NH4(+). Its function is as follows. Catalyzes the hydrolytic deamination of adenine to hypoxanthine. Plays an important role in the purine salvage pathway and in nitrogen catabolism. The protein is Adenine deaminase of Rhodospirillum rubrum (strain ATCC 11170 / ATH 1.1.1 / DSM 467 / LMG 4362 / NCIMB 8255 / S1).